The following is a 243-amino-acid chain: Nuclear cap-binding protein subunit 2 (243 aa).

MRNA contacts are provided by residues Y14, Y37, 106–110, 117–121, and 127–128; these read RVDFD, RQWGR, and QV. An RRM domain is found at 34–112; sequence VTVYVGNMSF…RPIRVDFDWG (79 aa). Disordered regions lie at residues 120–144 and 161–243; these read GRGR…GGYG and GGAF…RRRR. Composition is skewed to basic and acidic residues over residues 128-138 and 173-228; these read VRDEYRTDYDP and DRGD…REKG.

It belongs to the RRM NCBP2 family. As to quaternary structure, component of the nuclear cap-binding complex (CBC), a heterodimer composed of ABH1/CBP80 and CBP20 that interacts with m7GpppG-capped RNA.

The protein localises to the nucleus. It is found in the cytoplasm. Its function is as follows. Component of the cap-binding complex (CBC), which binds co-transcriptionally to the 5' cap of pre-mRNAs and is involved in various processes such as pre-mRNA splicing and RNA-mediated gene silencing (RNAi) by microRNAs (miRNAs). The CBC complex is involved in miRNA-mediated RNA interference and is required for primary miRNA processing. In the CBC complex, CBP20 recognizes and binds capped RNAs (m7GpppG-capped RNA) but requires ABH1/CBP80 to stabilize the movement of its N-terminal loop and lock the CBC into a high affinity cap-binding state with the cap structure. CBP20 also plays a role in stabilization of ABH1/CBP80 and ABH1/CBP80 localization to the nucleus. This Oryza sativa subsp. japonica (Rice) protein is Nuclear cap-binding protein subunit 2 (CBP20).